We begin with the raw amino-acid sequence, 218 residues long: Non-structural protein NP-1 (218 aa).

Disordered stretches follow at residues Met-1 to Pro-89 and Thr-195 to Asn-218. 2 stretches are compositionally biased toward basic residues: residues Asp-8–Ser-18 and Pro-27–Ile-40. Residues Ser-58–Lys-67 are compositionally biased toward polar residues. Over residues Thr-73–Arg-86 the composition is skewed to basic and acidic residues. The span at Glu-196 to Met-205 shows a compositional bias: acidic residues.

This sequence belongs to the Bocaparvovirus Non-structural protein NP-1 family.

It localises to the host nucleus. Its function is as follows. Required for the expression of the capsid proteins. Performs the splicing and internal polyadenylation of the viral capsid-encoding mRNA precursor, which allows its maturation and expression. Transactivates the viral promoter. The protein is Non-structural protein NP-1 (NP1) of Human bocavirus 3 (HBoV3).